The primary structure comprises 277 residues: Myelin proteolipid protein (277 aa).

Residues 2 to 9 (GLLECCAR) are Cytoplasmic-facing. S-palmitoyl cysteine attachment occurs at residues Cys-6, Cys-7, and Cys-10. A helical transmembrane segment spans residues 10-36 (CLVGAPFASLVATGLCFFGVALFCGCG). Residues 37–63 (HEALTGTEKLIETYFSKNYQDYEYLIN) lie on the Extracellular side of the membrane. Residues 64 to 88 (VIHAFQYVIYGTASFFFLYGALLLA) form a helical membrane-spanning segment. Residues 89 to 151 (EGFYTTGAVR…LGKWLGHPDK (63 aa)) lie on the Cytoplasmic side of the membrane. Cys-109 carries S-palmitoyl cysteine lipidation. Ser-114 carries the post-translational modification Phosphoserine. Thr-116 and Thr-118 each carry phosphothreonine. Residues Cys-139 and Cys-141 are each lipidated (S-palmitoyl cysteine). The chain crosses the membrane as a helical span at residues 152 to 177 (FVGITYALTVVWLLVFACSAVPVYIY). Over 178–233 (FNTWTTCQSIAFPSKTSASIGSLCADARMYGVLPWNAFPGKVCGSNLLSICKTAEF) the chain is Extracellular. Cystine bridges form between Cys-184-Cys-228 and Cys-201-Cys-220. Residue Ser-199 is the site of O-palmitoyl serine attachment. A helical membrane pass occupies residues 234–260 (QMTFHLFIAAFVGAAATLVSLLTFMIA). Residues 261–277 (ATYNFAVLKLMGRGTKF) lie on the Cytoplasmic side of the membrane.

This sequence belongs to the myelin proteolipid protein family. Interacts with MAL.

Its subcellular location is the cell membrane. The protein localises to the myelin membrane. This is the major myelin protein from the central nervous system. It plays an important role in the formation or maintenance of the multilamellar structure of myelin. This chain is Myelin proteolipid protein (Plp1), found in Mus musculus (Mouse).